Reading from the N-terminus, the 200-residue chain is MASSLTCTGVIWALLSFLSAATSCVGFFMPYWLWGSQLGKPVSFGTFRRCSYPVHDESRQMMVMVEECGRYASFQGIPSTEWRICTIVTGLGCGLLLLVALTALMGCCVSELISRTVGRVAGGIQFLGGLLIGAGCALYPLGWDSEEVRQTCGYISDQFDLGKCEIGWAYYCTGAGAAAAMLLCTWLACFSGKKQKHYPY.

The first 23 residues, 1–23 (MASSLTCTGVIWALLSFLSAATS), serve as a signal peptide directing secretion. 3 helical membrane passes run 84 to 104 (ICTIVTGLGCGLLLLVALTAL), 123 to 143 (GIQFLGGLLIGAGCALYPLGW), and 166 to 186 (IGWAYYCTGAGAAAAMLLCTW).

It belongs to the LHFP family.

The protein resides in the membrane. This is LHFPL tetraspan subfamily member 6 protein from Rattus norvegicus (Rat).